A 469-amino-acid chain; its full sequence is Probable periplasmic serine endoprotease DegP-like (469 aa).

An N-terminal signal peptide occupies residues M1 to A25. Residues H108, D138, and S211 each act as charge relay system in the active site. Residues G209–S211 and L266–I270 each bind substrate. PDZ domains lie at L255–G346 and A352–G457.

Belongs to the peptidase S1C family.

It is found in the periplasm. The catalysed reaction is Acts on substrates that are at least partially unfolded. The cleavage site P1 residue is normally between a pair of hydrophobic residues, such as Val-|-Val.. Its function is as follows. Might be efficient in the degradation of transiently denatured and unfolded proteins which accumulate in the periplasm following stress conditions. The protein is Probable periplasmic serine endoprotease DegP-like (mucD) of Hahella chejuensis (strain KCTC 2396).